The following is a 247-amino-acid chain: Carboxy-S-adenosyl-L-methionine synthase (247 aa).

S-adenosyl-L-methionine is bound by residues tyrosine 40, 65 to 67 (GAS), 90 to 91 (DN), 122 to 123 (DI), asparagine 137, and arginine 204.

This sequence belongs to the class I-like SAM-binding methyltransferase superfamily. Cx-SAM synthase family. As to quaternary structure, homodimer.

It catalyses the reaction prephenate + S-adenosyl-L-methionine = carboxy-S-adenosyl-L-methionine + 3-phenylpyruvate + H2O. In terms of biological role, catalyzes the conversion of S-adenosyl-L-methionine (SAM) to carboxy-S-adenosyl-L-methionine (Cx-SAM). This Ectopseudomonas mendocina (strain ymp) (Pseudomonas mendocina) protein is Carboxy-S-adenosyl-L-methionine synthase.